The chain runs to 364 residues: Cobalt-precorrin-5B C(1)-methyltransferase (364 aa).

It belongs to the CbiD family.

The catalysed reaction is Co-precorrin-5B + S-adenosyl-L-methionine = Co-precorrin-6A + S-adenosyl-L-homocysteine. It participates in cofactor biosynthesis; adenosylcobalamin biosynthesis; cob(II)yrinate a,c-diamide from sirohydrochlorin (anaerobic route): step 6/10. Catalyzes the methylation of C-1 in cobalt-precorrin-5B to form cobalt-precorrin-6A. The polypeptide is Cobalt-precorrin-5B C(1)-methyltransferase (Pseudomonas putida (strain W619)).